The following is a 248-amino-acid chain: DNA repair protein RecO (248 aa).

This sequence belongs to the RecO family.

Involved in DNA repair and RecF pathway recombination. In Bradyrhizobium sp. (strain ORS 278), this protein is DNA repair protein RecO.